We begin with the raw amino-acid sequence, 263 residues long: Regulatory protein RecX (263 aa).

It belongs to the RecX family.

The protein localises to the cytoplasm. In terms of biological role, modulates RecA activity. The protein is Regulatory protein RecX of Bacillus licheniformis (strain ATCC 14580 / DSM 13 / JCM 2505 / CCUG 7422 / NBRC 12200 / NCIMB 9375 / NCTC 10341 / NRRL NRS-1264 / Gibson 46).